A 282-amino-acid chain; its full sequence is HTH-type transcriptional activator RhaR (282 aa).

An HTH araC/xylS-type domain is found at 179–277; it reads DKLITALANS…GMTPSQWRHL (99 aa). 2 consecutive DNA-binding regions (H-T-H motif) follow at residues 196 to 217 and 244 to 267; these read DAFC…RAQT and ISEI…TRET.

As to quaternary structure, binds DNA as a dimer.

The protein resides in the cytoplasm. Activates expression of the rhaSR operon in response to L-rhamnose. This chain is HTH-type transcriptional activator RhaR, found in Salmonella schwarzengrund (strain CVM19633).